Consider the following 315-residue polypeptide: MIKIYAPASIGNVGVGFDILGIAIKPIDKTLLGDCISIKPSKKFQLKNHGNFSKQLPVNIKENIIWKAWKYFNKKAKKKKTVKIVLEKNMPIGSGLGSSASSIVACVIALNKFYKTKLSKTKLLKIMGKLEGIISGEVHYDNVAPCYLGGLQLITNDQKNITQKLPIFTDWLWVIAWPGVTLSTSQARNILPLKYKKKTCIHNSRNLATFIHALYTKQSELAIRYMKDIIAEPYRIPLIPKFLISKKKIIELGALTCNISGSGPTLFSVCPNISIAKKVKIWLKKNYMENQTGFVHICKIDQSGARKMEKKNEII.

91–101 is a binding site for ATP; it reads PIGSGLGSSAS.

Belongs to the GHMP kinase family. Homoserine kinase subfamily.

The protein localises to the cytoplasm. The enzyme catalyses L-homoserine + ATP = O-phospho-L-homoserine + ADP + H(+). The protein operates within amino-acid biosynthesis; L-threonine biosynthesis; L-threonine from L-aspartate: step 4/5. Catalyzes the ATP-dependent phosphorylation of L-homoserine to L-homoserine phosphate. The chain is Homoserine kinase from Buchnera aphidicola subsp. Cinara cedri (strain Cc).